Reading from the N-terminus, the 493-residue chain is 3-ketoacyl-CoA synthase 16 (493 aa).

The N-terminal stretch at 1–35 is a signal peptide; it reads MDYPMKKVKIFFNYLMAHRFKLCFLPLMVAIAVEA. The helical transmembrane segment at 52–74 threads the bilayer; sequence NNHTSLTMFFLYLALGSTLYLMT. Residues 71–366 form the FAE domain; sequence YLMTRPKPVY…FFVRFVKKKF (296 aa). Residues C221, H300, H384, H388, H417, and N421 contribute to the active site.

This sequence belongs to the thiolase-like superfamily. Chalcone/stilbene synthases family. Expressed in siliques.

The protein localises to the membrane. The catalysed reaction is a very-long-chain acyl-CoA + malonyl-CoA + H(+) = a very-long-chain 3-oxoacyl-CoA + CO2 + CoA. Its pathway is lipid metabolism; fatty acid biosynthesis. This Arabidopsis thaliana (Mouse-ear cress) protein is 3-ketoacyl-CoA synthase 16.